Consider the following 53-residue polypeptide: UPF0391 membrane protein BamMC406_6344 (53 aa).

2 consecutive transmembrane segments (helical) span residues 5–25 (AIIF…GIAA) and 30–50 (IAKI…LLGV).

It belongs to the UPF0391 family.

It localises to the cell membrane. In Burkholderia ambifaria (strain MC40-6), this protein is UPF0391 membrane protein BamMC406_6344.